Here is a 1752-residue protein sequence, read N- to C-terminus: Chitin synthase E (1752 aa).

Residue 1–8 (GESGSGKT) participates in ATP binding. The disordered stretch occupies residues 492–520 (SSKPLRMPSMARRKTSPSSRLAFDAGDAD). The interval 558–582 (LDIVNKCLSSTNLNPYFIFCLKPND) is actin-binding. 2 helical membrane passes run 789–809 (WIAL…KLFG) and 828–848 (LIIW…PGLV). The Cytochrome b5 heme-binding domain maps to 852–940 (QHVYSAAELS…LLDYRPTNIS (89 aa)). N938 and N963 each carry an N-linked (GlcNAc...) asparagine glycan. A helical membrane pass occupies residues 1099–1119 (FILAISVLICSIIVFKFLAAL). N-linked (GlcNAc...) asparagine glycosylation is found at N1322, N1356, and N1462. The next 3 membrane-spanning stretches (helical) occupy residues 1494–1514 (LSTV…YWLV), 1520–1540 (IPYT…LIFI), and 1547–1567 (MVGW…PCPS). N-linked (GlcNAc...) asparagine glycosylation is present at N1685. In terms of domain architecture, DEK-C spans 1689-1744 (LPSDDAILAEIREILRTADLMSVTKKSIKLELERAFGVNLDLKRPYINSGKGYTFP).

In the N-terminal section; belongs to the TRAFAC class myosin-kinesin ATPase superfamily. Myosin family. The protein in the C-terminal section; belongs to the chitin synthase family. Class V subfamily.

It is found in the cell membrane. It localises to the cell septum. Its subcellular location is the cell tip. The catalysed reaction is [(1-&gt;4)-N-acetyl-beta-D-glucosaminyl](n) + UDP-N-acetyl-alpha-D-glucosamine = [(1-&gt;4)-N-acetyl-beta-D-glucosaminyl](n+1) + UDP + H(+). In terms of biological role, polymerizes chitin, a structural polymer of the cell wall and septum, by transferring the sugar moiety of UDP-GlcNAc to the non-reducing end of the growing chitin polymer. Important for hyphal growth and conidiophore development but not pathogenicity. The protein is Chitin synthase E of Aspergillus fumigatus (Neosartorya fumigata).